A 274-amino-acid chain; its full sequence is Protein CIMAP1C (274 aa).

The tract at residues 1–27 is disordered; sequence MKLPKGTRSSVYFAQHPEKEPLPSRQE. Residues 16–27 show a composition bias toward basic and acidic residues; the sequence is HPEKEPLPSRQE. STPGR repeat units follow at residues 199-224 and 235-260; these read PGPT…MAKR and PGPG…MGIK.

This sequence belongs to the CIMAP family.

The sequence is that of Protein CIMAP1C from Homo sapiens (Human).